The sequence spans 611 residues: TANK-binding kinase 1-binding protein 1 (611 aa).

The interval 1 to 280 (MESMFEDDIS…QDLASNQSEC (280 aa)) is homodimerization. Residues 48–162 (YGDIKERLGG…ALVETHLRQI (115 aa)) are a coiled coil. Residue serine 184 is modified to Phosphoserine. The stretch at 218–277 (TSVSVSELERRRLEEALEAAQGEARGAQLREEQLQAECERLQGELKQLQETRAQDLASNQ) forms a coiled coil. Positions 281–330 (DMAWVKRVGDDQVNLALAYTELTEELGRLRELSSLQGRILRTLLQEQARN) are interaction with TBK1 and IKBKE. The interval 328 to 437 (ARNAGQRHSP…PPPPPGERTL (110 aa)) is disordered. Residues 346-361 (PACPSPSPPARPPPCA) are compositionally biased toward pro residues. Positions 362 to 372 (PCQSPAAQRRS) are enriched in low complexity. Residues serine 365, serine 372, serine 379, serine 385, serine 400, and serine 415 each carry the phosphoserine modification. A compositionally biased stretch (pro residues) spans 389–406 (PSCPSPVPQRRSPVPPSC). The span at 416 to 433 (PVPPSCPAPQPRPPPPPG) shows a compositional bias: pro residues. 2 positions are modified to phosphoserine: serine 500 and serine 530. The segment at 579 to 605 (IRSCPLCQLGFPVGYPDDALIKHIDSH) adopts a UBZ1-type zinc-finger fold. Zn(2+) contacts are provided by cysteine 582, cysteine 585, histidine 601, and histidine 605.

As to quaternary structure, homodimer. May form a heterodimer with NAP1. Interacts with TKB1 and IKBKE. Weakly interacts with DDX3X.

Its function is as follows. Adapter protein which constitutively binds TBK1 and IKBKE playing a role in antiviral innate immunity. Essential for the efficient induction of IRF-dependent transcription following infection with Sendai virus. The chain is TANK-binding kinase 1-binding protein 1 from Mus musculus (Mouse).